Consider the following 865-residue polypeptide: Outer membrane usher protein HtrE (865 aa).

The N-terminal stretch at 1 to 29 (MTIEYTKNYHHLTRIATFCALLYCNTAFS) is a signal peptide. Cys838 and Cys862 are disulfide-bonded.

The protein belongs to the fimbrial export usher family.

It is found in the cell outer membrane. Its function is as follows. Part of the yadCKLM-htrE-yadVN fimbrial operon. Could contribute to adhesion to various surfaces in specific environmental niches. Probably involved in the export and assembly of fimbrial subunits across the outer membrane. The protein is Outer membrane usher protein HtrE (htrE) of Escherichia coli (strain K12).